The primary structure comprises 170 residues: Adenine phosphoribosyltransferase (170 aa).

Belongs to the purine/pyrimidine phosphoribosyltransferase family. As to quaternary structure, homodimer.

Its subcellular location is the cytoplasm. It catalyses the reaction AMP + diphosphate = 5-phospho-alpha-D-ribose 1-diphosphate + adenine. It functions in the pathway purine metabolism; AMP biosynthesis via salvage pathway; AMP from adenine: step 1/1. Catalyzes a salvage reaction resulting in the formation of AMP, that is energically less costly than de novo synthesis. This chain is Adenine phosphoribosyltransferase, found in Thermotoga petrophila (strain ATCC BAA-488 / DSM 13995 / JCM 10881 / RKU-1).